Consider the following 189-residue polypeptide: uncharacterized protein (189 aa).

This is an uncharacterized protein from Aquifex aeolicus (strain VF5).